Here is a 712-residue protein sequence, read N- to C-terminus: 1,4-alpha-glucan branching enzyme GlgB (712 aa).

D397 (nucleophile) is an active-site residue. Catalysis depends on E450, which acts as the Proton donor.

Belongs to the glycosyl hydrolase 13 family. GlgB subfamily. In terms of assembly, monomer.

It catalyses the reaction Transfers a segment of a (1-&gt;4)-alpha-D-glucan chain to a primary hydroxy group in a similar glucan chain.. It participates in glycan biosynthesis; glycogen biosynthesis. Catalyzes the formation of the alpha-1,6-glucosidic linkages in glycogen by scission of a 1,4-alpha-linked oligosaccharide from growing alpha-1,4-glucan chains and the subsequent attachment of the oligosaccharide to the alpha-1,6 position. This Bradyrhizobium sp. (strain BTAi1 / ATCC BAA-1182) protein is 1,4-alpha-glucan branching enzyme GlgB.